The chain runs to 129 residues: Large ribosomal subunit protein bL17 (129 aa).

This sequence belongs to the bacterial ribosomal protein bL17 family. In terms of assembly, part of the 50S ribosomal subunit. Contacts protein L32.

The chain is Large ribosomal subunit protein bL17 from Pasteurella multocida (strain Pm70).